We begin with the raw amino-acid sequence, 763 residues long: Phosphoglycerol transferase I (763 aa).

The next 4 membrane-spanning stretches (helical) occupy residues 4–19, 26–48, 76–98, and 110–132; these read LLSV…IYAW, WWFA…LYAS, YILP…GWVL, and YSLL…RQIT.

The protein belongs to the OpgB family.

Its subcellular location is the cell inner membrane. It carries out the reaction a phosphatidylglycerol + a membrane-derived-oligosaccharide D-glucose = a 1,2-diacyl-sn-glycerol + a membrane-derived-oligosaccharide 6-(glycerophospho)-D-glucose.. It functions in the pathway glycan metabolism; osmoregulated periplasmic glucan (OPG) biosynthesis. Its function is as follows. Transfers a phosphoglycerol residue from phosphatidylglycerol to the membrane-bound nascent glucan backbones. The protein is Phosphoglycerol transferase I of Salmonella typhi.